The following is a 251-amino-acid chain: 3-dehydroquinate dehydratase (251 aa).

Residues 47 to 49 (EWR) and R83 contribute to the 3-dehydroquinate site. The active-site Proton donor/acceptor is H144. The active-site Schiff-base intermediate with substrate is K171. R214, S233, and Q237 together coordinate 3-dehydroquinate.

It belongs to the type-I 3-dehydroquinase family. Homodimer.

The enzyme catalyses 3-dehydroquinate = 3-dehydroshikimate + H2O. It participates in metabolic intermediate biosynthesis; chorismate biosynthesis; chorismate from D-erythrose 4-phosphate and phosphoenolpyruvate: step 3/7. In terms of biological role, involved in the third step of the chorismate pathway, which leads to the biosynthesis of aromatic amino acids. Catalyzes the cis-dehydration of 3-dehydroquinate (DHQ) and introduces the first double bond of the aromatic ring to yield 3-dehydroshikimate. The protein is 3-dehydroquinate dehydratase of Klebsiella pneumoniae (strain 342).